A 101-amino-acid chain; its full sequence is Small ribosomal subunit protein uS14 (101 aa).

It belongs to the universal ribosomal protein uS14 family. Part of the 30S ribosomal subunit. Contacts proteins S3 and S10.

Its function is as follows. Binds 16S rRNA, required for the assembly of 30S particles and may also be responsible for determining the conformation of the 16S rRNA at the A site. The sequence is that of Small ribosomal subunit protein uS14 from Ralstonia pickettii (strain 12J).